Consider the following 136-residue polypeptide: Galectin-7 (136 aa).

The Galectin domain maps to 6 to 136 (HKTSLPQGVR…DVQLHSLNIF (131 aa)). 70-76 (WGREERG) provides a ligand contact to a beta-D-galactoside.

As to quaternary structure, monomer.

The protein localises to the cytoplasm. It localises to the nucleus. The protein resides in the secreted. Could be involved in cell-cell and/or cell-matrix interactions necessary for normal growth control. Pro-apoptotic protein that functions intracellularly upstream of JNK activation and cytochrome c release. The chain is Galectin-7 (Lgals7) from Mus musculus (Mouse).